We begin with the raw amino-acid sequence, 445 residues long: Alpha/beta hydrolase psoB (445 aa).

Catalysis depends on serine 246, which acts as the Nucleophile.

The protein belongs to the AB hydrolase superfamily. FUS2 hydrolase family. As to quaternary structure, homodimer.

It functions in the pathway secondary metabolite biosynthesis. Its function is as follows. Alpha/beta hydrolase; part of the gene cluster that mediates the biosynthesis of pseurotin A, a competitive inhibitor of chitin synthase and an inducer of nerve-cell proliferation. The PKS-NRPS hybrid synthetase psoA is responsible for the biosynthesis of azaspirene, one of the first intermediates having the 1-oxa-7-azaspiro[4,4]-non-2-ene-4,6-dione core of pseurotin, via condensation of one acetyl-CoA, 4 malonyl-CoA, and a L-phenylalanine molecule. The dual-functional monooxygenase/methyltransferase psoF seems to be involved in the addition of the C3 methyl group onto the pseurotin scaffold. Azaspirene is then converted to synerazol through 4 steps including oxidation of C17 by the cytochrome P450 monooxygenase psoD, O-methylation of the hydroxy group of C8 by the methyltransferase psoC, and the trans-to-cis isomerization of the C13 olefin by the glutathione S-transferase psoE. The fourth step of synerazol production is performed by the dual-functional monooxygenase/methyltransferase psoF which seems to catalyze the epoxidation of the intermediate deepoxy-synerazol. Synerazol can be attacked by a water molecule nonenzymatically at two different positions to yield two diol products, pseurotin A and pseurotin D. The polypeptide is Alpha/beta hydrolase psoB (Aspergillus fumigatus (strain ATCC MYA-4609 / CBS 101355 / FGSC A1100 / Af293) (Neosartorya fumigata)).